The primary structure comprises 349 residues: MARGRKMCKPRAVEAAAAAVAATAPGPEMVEQRGPGRPRSDGENVFAGQSKIYAYMSPNKCSAMRSPLQEENSVAHHEVKCPGKPLAGIYRKREEKRNTGNVIRSAVKSDEQKSKDTRRGPLAPFPNQKSEAAEPPKTPPPSCDSTNVAVAKQALKKSLKGKQAPRKKSQGKTQQNRKLTDFYPVRRSSRKSKAELQSEERKKNELIESGKEEGMKIDLIDGKGRGVIATKQFSRGDFVVEYHGDLIEITDAKKREALYVQDPSTGCYMYYFQYLSKTYCVDATQETNRLGRLINHSKCGNCQTKLHDIDGVPHLILIASRDIAAGEELLYDYGDRSKASIEAYPWLKH.

The tract at residues 18–46 (AAVAATAPGPEMVEQRGPGRPRSDGENVF) is disordered. Ser57 carries the phosphoserine modification. The interval 65–207 (RSPLQEENSV…SEERKKNELI (143 aa)) is disordered. The segment covering 107 to 119 (VKSDEQKSKDTRR) has biased composition (basic and acidic residues). A Phosphothreonine modification is found at Thr138. Residues 154–170 (ALKKSLKGKQAPRKKSQ) show a composition bias toward basic residues. Basic and acidic residues predominate over residues 192–207 (SKAELQSEERKKNELI). The SET domain occupies 213-334 (EGMKIDLIDG…AGEELLYDYG (122 aa)). S-adenosyl-L-methionine contacts are provided by residues 223-225 (KGR), Tyr268, and 295-296 (NH).

This sequence belongs to the class V-like SAM-binding methyltransferase superfamily. Histone-lysine methyltransferase family. PR/SET subfamily. In terms of assembly, interacts with L3MBTL1. Interacts with SIRT2 (phosphorylated form); the interaction is direct, stimulates KMT5A-mediated methyltransferase activity at histone H4 'Lys-20' (H4K20me1) and is increased in a H(2)O(2)-induced oxidative stress-dependent manner. Ubiquitinated and degraded by the DCX(DTL) complex.

It localises to the nucleus. The protein resides in the chromosome. It carries out the reaction L-lysyl(20)-[histone H4] + S-adenosyl-L-methionine = N(6)-methyl-L-lysyl(20)-[histone H4] + S-adenosyl-L-homocysteine + H(+). The enzyme catalyses L-lysyl-[protein] + S-adenosyl-L-methionine = N(6)-methyl-L-lysyl-[protein] + S-adenosyl-L-homocysteine + H(+). Its function is as follows. Protein-lysine N-methyltransferase that monomethylates both histones and non-histone proteins. Specifically monomethylates 'Lys-20' of histone H4 (H4K20me1). H4K20me1 is enriched during mitosis and represents a specific tag for epigenetic transcriptional repression. Mainly functions in euchromatin regions, thereby playing a central role in the silencing of euchromatic genes. Required for cell proliferation, probably by contributing to the maintenance of proper higher-order structure of DNA during mitosis. Involved in chromosome condensation and proper cytokinesis. Nucleosomes are preferred as substrate compared to free histones. Mediates monomethylation of p53/TP53 at 'Lys-382', leading to repress p53/TP53-target genes. Plays a negative role in TGF-beta response regulation and a positive role in cell migration. The polypeptide is N-lysine methyltransferase KMT5A (Mus musculus (Mouse)).